The sequence spans 241 residues: Large ribosomal subunit protein uL30 (241 aa).

Residues 1 to 25 are disordered; that stretch reads MASTLKPETLVKKSKAQQKTAEERA.

It belongs to the universal ribosomal protein uL30 family.

This chain is Large ribosomal subunit protein uL30 (RPL7), found in Debaryomyces hansenii (strain ATCC 36239 / CBS 767 / BCRC 21394 / JCM 1990 / NBRC 0083 / IGC 2968) (Yeast).